Reading from the N-terminus, the 209-residue chain is Probable nicotinate-nucleotide adenylyltransferase (209 aa).

The protein belongs to the NadD family.

It carries out the reaction nicotinate beta-D-ribonucleotide + ATP + H(+) = deamido-NAD(+) + diphosphate. Its pathway is cofactor biosynthesis; NAD(+) biosynthesis; deamido-NAD(+) from nicotinate D-ribonucleotide: step 1/1. Its function is as follows. Catalyzes the reversible adenylation of nicotinate mononucleotide (NaMN) to nicotinic acid adenine dinucleotide (NaAD). This is Probable nicotinate-nucleotide adenylyltransferase from Shewanella woodyi (strain ATCC 51908 / MS32).